Here is a 485-residue protein sequence, read N- to C-terminus: Delta(14)-sterol reductase ERG24A (485 aa).

Helical transmembrane passes span 18–38, 77–97, 131–151, and 155–175; these read FFGP…VYVF, GLVS…SLIL, LAVL…WTFM, and FIQI…FVYV. A glycan (N-linked (GlcNAc...) asparagine) is linked at Asn-240. A run of 4 helical transmembrane segments spans residues 259–279, 285–305, 319–339, and 431–451; these read ILIT…EPAI, ITTD…VPYV, SLGP…FYIF, and AQGW…ILLI.

Belongs to the ERG4/ERG24 family.

The protein localises to the endoplasmic reticulum membrane. It carries out the reaction 4,4-dimethyl-5alpha-cholesta-8,24-dien-3beta-ol + NADP(+) = 4,4-dimethyl-5alpha-cholesta-8,14,24-trien-3beta-ol + NADPH + H(+). It functions in the pathway steroid metabolism; ergosterol biosynthesis. Functionally, delta(14)-sterol reductase; part of the third module of ergosterol biosynthesis pathway that includes the late steps of the pathway. Catalyzes the reduction of the C14=C15 double bond within 4,4,24-trimethyl ergosta-8,14,24(28)-trienolto produce 4,4-dimethylfecosterol. The third module or late pathway involves the ergosterol synthesis itself through consecutive reactions that mainly occur in the endoplasmic reticulum (ER) membrane. Firstly, the squalene synthase ERG9 catalyzes the condensation of 2 farnesyl pyrophosphate moieties to form squalene, which is the precursor of all steroids. Squalene synthase is crucial for balancing the incorporation of farnesyl diphosphate (FPP) into sterol and nonsterol isoprene synthesis. Secondly, squalene is converted into lanosterol by the consecutive action of the squalene epoxidase ERG1 and the lanosterol synthase ERG7. Then, the delta(24)-sterol C-methyltransferase ERG6 methylates lanosterol at C-24 to produce eburicol. Eburicol is the substrate of the sterol 14-alpha demethylase encoded by CYP51A, CYP51B and CYP51C, to yield 4,4,24-trimethyl ergosta-8,14,24(28)-trienol. CYP51B encodes the enzyme primarily responsible for sterol 14-alpha-demethylation, and plays an essential role in ascospore formation. CYP51A encodes an additional sterol 14-alpha-demethylase, induced on ergosterol depletion and responsible for the intrinsic variation in azole sensitivity. The third CYP51 isoform, CYP51C, does not encode a sterol 14-alpha-demethylase, but is required for full virulence on host wheat ears. The C-14 reductase ERG24 then reduces the C14=C15 double bond which leads to 4,4-dimethylfecosterol. A sequence of further demethylations at C-4, involving the C-4 demethylation complex containing the C-4 methylsterol oxidases ERG25, the sterol-4-alpha-carboxylate 3-dehydrogenase ERG26 and the 3-keto-steroid reductase ERG27, leads to the production of fecosterol via 4-methylfecosterol. ERG28 has a role as a scaffold to help anchor ERG25, ERG26 and ERG27 to the endoplasmic reticulum. The C-8 sterol isomerase ERG2 then catalyzes the reaction which results in unsaturation at C-7 in the B ring of sterols and thus converts fecosterol to episterol. The sterol-C5-desaturases ERG3A and ERG3BB then catalyze the introduction of a C-5 double bond in the B ring to produce 5-dehydroepisterol. The C-22 sterol desaturases ERG5A and ERG5B further convert 5-dehydroepisterol into ergosta-5,7,22,24(28)-tetraen-3beta-ol by forming the C-22(23) double bond in the sterol side chain. Finally, ergosta-5,7,22,24(28)-tetraen-3beta-ol is substrate of the C-24(28) sterol reductase ERG4 to produce ergosterol. The polypeptide is Delta(14)-sterol reductase ERG24A (Gibberella zeae (strain ATCC MYA-4620 / CBS 123657 / FGSC 9075 / NRRL 31084 / PH-1) (Wheat head blight fungus)).